The primary structure comprises 126 residues: Probable DNA-directed RNA polymerase II subunit RPB11 (126 aa).

The protein belongs to the archaeal Rpo11/eukaryotic RPB11/RPC19 RNA polymerase subunit family. In terms of assembly, component of the RNA polymerase II (Pol II) complex consisting of 12 subunits.

It is found in the nucleus. In terms of biological role, DNA-dependent RNA polymerase catalyzes the transcription of DNA into RNA using the four ribonucleoside triphosphates as substrates. Component of RNA polymerase II which synthesizes mRNA precursors and many functional non-coding RNAs. Pol II is the central component of the basal RNA polymerase II transcription machinery. It is composed of mobile elements that move relative to each other. RPB11 is part of the core element with the central large cleft. The chain is Probable DNA-directed RNA polymerase II subunit RPB11 from Plasmodium chabaudi chabaudi.